Here is a 125-residue protein sequence, read N- to C-terminus: Protein sigma-1-small (125 aa).

Belongs to the orthoreovirus sigma-1s protein family.

The chain is Protein sigma-1-small (S1) from Mammalia (T2J).